Consider the following 866-residue polypeptide: Protein SEY1 (866 aa).

The Cytoplasmic segment spans residues 1–746 (MVSNGHFAYA…KRSAIGGMTQ (746 aa)). Residues 48-305 (GFNYHLISVF…IPADGFAVYA (258 aa)) form the GB1/RHD3-type G domain. Position 58-65 (58-65 (GSQSTGKS)) interacts with GTP. The stretch at 480–506 (SNYTQELALYQKDLEKISAQLRKDEMR) forms a coiled coil. Residues 747–767 (IPVYFYILLLALGWNEIIAVL) traverse the membrane as a helical segment. Residues 768-770 (RNP) are Lumenal-facing. A helical membrane pass occupies residues 771-791 (VYFFMLFLCSVAAYIIYQLNL). Topologically, residues 792-866 (WGPMVKMAEA…DDEVEGEETW (75 aa)) are cytoplasmic. The disordered stretch occupies residues 840-866 (SHVRSGRNATKINERDDDDEVEGEETW). Over residues 854 to 866 (RDDDDEVEGEETW) the composition is skewed to acidic residues.

This sequence belongs to the TRAFAC class dynamin-like GTPase superfamily. GB1/RHD3 GTPase family. RHD3 subfamily.

It is found in the endoplasmic reticulum membrane. Its function is as follows. Cooperates with the reticulon proteins and tubule-shaping DP1 family proteins to generate and maintain the structure of the tubular endoplasmic reticulum network. Has GTPase activity, which is required for its function in ER organization. This is Protein SEY1 from Coccidioides immitis (strain RS) (Valley fever fungus).